Here is a 466-residue protein sequence, read N- to C-terminus: MTAAVDTSNTLHFQCETGNYHTFCPISCVAWLYPKIEDSFFLVIGTKTCGYFLQNAMGVMIFAEPRYAMAELEEGDISAKLNDYEELKRLCLQIQRDRNPSVIVWIGTCTTEIIKMDLEGLAQKLEAEIGIPIVVARANGLDYAFTQGEDTVLASMAQRCPEQVQEEERETRGGLQALFYGLRSGKKKEEEGFHPHPPLVIFGSVPDPVVTQLTLELKKYGIRVSGWLPAKRYGELPAIEPGTHVVGVNPFLSRTATTLVRRKKAKLIPAPFPIGPDGTRAWIEAIARELGIPTPGLAEREAEVWRHPQVQEYLGLLRGKSVFFMGDNLLEVSLARFLVRCGMTVQEIGIPYLDKRYQAAELALLERTCEEMGVPKPTLVEKPDNYHQLQRIKALQPDLVITGMAHANPLEARGITTKWSVEFTFAPIHGFGNTQALLELVTRPLRRNAALKGLGWEQLVREEASV.

[4Fe-4S] cluster contacts are provided by cysteine 24, cysteine 49, and cysteine 109.

It belongs to the BchN/ChlN family. Protochlorophyllide reductase is composed of three subunits; ChlL, ChlN and ChlB. Forms a heterotetramer of two ChlB and two ChlN subunits. The cofactor is [4Fe-4S] cluster.

The enzyme catalyses chlorophyllide a + oxidized 2[4Fe-4S]-[ferredoxin] + 2 ADP + 2 phosphate = protochlorophyllide a + reduced 2[4Fe-4S]-[ferredoxin] + 2 ATP + 2 H2O. Its pathway is porphyrin-containing compound metabolism; chlorophyll biosynthesis (light-independent). Functionally, component of the dark-operative protochlorophyllide reductase (DPOR) that uses Mg-ATP and reduced ferredoxin to reduce ring D of protochlorophyllide (Pchlide) to form chlorophyllide a (Chlide). This reaction is light-independent. The NB-protein (ChlN-ChlB) is the catalytic component of the complex. This Synechococcus sp. (strain JA-3-3Ab) (Cyanobacteria bacterium Yellowstone A-Prime) protein is Light-independent protochlorophyllide reductase subunit N.